A 354-amino-acid polypeptide reads, in one-letter code: Allantoicase (354 aa).

This sequence belongs to the allantoicase family.

It catalyses the reaction allantoate + H2O = (S)-ureidoglycolate + urea. It functions in the pathway nitrogen metabolism; (S)-allantoin degradation; (S)-ureidoglycolate from allantoate (aminidohydrolase route): step 1/1. In terms of biological role, utilization of purines as secondary nitrogen sources, when primary sources are limiting. This is Allantoicase (alc-1) from Neurospora crassa (strain ATCC 24698 / 74-OR23-1A / CBS 708.71 / DSM 1257 / FGSC 987).